A 393-amino-acid polypeptide reads, in one-letter code: Messenger RNA-binding inhibitor of apoptosis 1 (393 aa).

Positions Glu-12–Lys-76 are KH 1-like. The KH 2-like stretch occupies residues Val-79–Phe-157. A KH 3-like region spans residues Glu-259–Asn-322. A disordered region spans residues Met-328–Asp-393. Residues Ser-345–Thr-359 show a composition bias toward low complexity.

In terms of assembly, may interact with wago-4. Expressed throughout the germline and in oocytes (at protein level).

The protein localises to the cytoplasm. It localises to the perinuclear region. RNA-binding protein which binds to its own mRNA and target mRNAs to negatively regulate gene expression to modulate apoptosis and differentiation in the germline. Negatively regulates the expression of the argonaute protein wago-4, and may thus play a role in RNA-mediated gene silencing (RNAi) in the germline. The chain is Messenger RNA-binding inhibitor of apoptosis 1 from Caenorhabditis elegans.